Reading from the N-terminus, the 486-residue chain is MIQLNEPLTHVRTKPILISLEFESPGRKTIDSVATESVLNSVVKINTFSSKPNICYPWQNKPQKKSKGSGFVIPGKMIITNAHVVANHILVLVIKRGSPKKYKAEVKAIGRECDLAILVIESKEFWEDMNPLELGDMPFLQESVNVIGYPTGGENISVTKGVVSRIESMDYAHGAINLPAIQTDAAMNPGNSGGPVCIGNKVVGVAFQTLGHSNNIGCLIPAPVVKHFITGVEKTGQYVGFCSLNLSYQHMDAQTRSHFKMNSEMTGILIYNINQHSDALNILKKYDVILSIDGVAIENDGTVIIPNRERTRLDDLVSLKQLGETILLKILREGKMHEFNITLRPVQRLVPAGQIDNNPSYYIFAGFVFVPLRKQHFKGSNGEQIVVISEVLADVINVEYYMYKHLKVNSVNKVKVENLKHLCELIEKCCTKDLRLELGDGRVIILDYQFAKSSTSLILERHRVPWAMSKDLMTDQSTTCSSTRLY.

A serine protease region spans residues 44-229; the sequence is KINTFSSKPN…IPAPVVKHFI (186 aa). Residues H83, D114, and S192 each act as charge relay system in the active site. The PDZ domain occupies 241-334; that stretch reads FCSLNLSYQH…TILLKILREG (94 aa).

Belongs to the peptidase S1C family.

Functionally, putative serine protease. The protein is Putative protease Do-like 13 (DEGP13) of Arabidopsis thaliana (Mouse-ear cress).